Reading from the N-terminus, the 446-residue chain is Histone acetyltransferase type B subunit 2 (446 aa).

5 WD repeats span residues 138–178, 189–229, 231–270, 286–326, and 330–370; these read DHPG…ITPS, GHKE…GTSK, LKYS…QIID, GHSD…SKVH, and GHQD…DEQT. The interval 372-376 is interaction with the histone H4 N-terminus; it reads DDAED. The WD 6 repeat unit spans residues 387–427; sequence GHTNHLADFSWNRNDPWLVCSAAEDNLLQIWKVANSIVSKE. Residues 427-446 form a disordered region; that stretch reads EPADMSTPELDDPKPKQSSH. Residues 437-446 are compositionally biased toward basic and acidic residues; it reads DDPKPKQSSH.

This sequence belongs to the WD repeat RBAP46/RBAP48/MSI1 family. As to quaternary structure, component of the HAT-B complex composed of at least hat-1 and hat-2. The HAT-B complex binds to histone H4 tail.

It localises to the cytoplasm. The protein resides in the nucleus. Its function is as follows. Regulatory subunit of the histone acetylase B (HAT-B) complex. The complex acetylates 'Lys-12' of histone H4 which is required for telomeric silencing. The polypeptide is Histone acetyltransferase type B subunit 2 (hat-2) (Neurospora crassa (strain ATCC 24698 / 74-OR23-1A / CBS 708.71 / DSM 1257 / FGSC 987)).